The chain runs to 94 residues: Co-chaperonin GroES (94 aa).

Belongs to the GroES chaperonin family. In terms of assembly, heptamer of 7 subunits arranged in a ring. Interacts with the chaperonin GroEL.

The protein resides in the cytoplasm. Its function is as follows. Together with the chaperonin GroEL, plays an essential role in assisting protein folding. The GroEL-GroES system forms a nano-cage that allows encapsulation of the non-native substrate proteins and provides a physical environment optimized to promote and accelerate protein folding. GroES binds to the apical surface of the GroEL ring, thereby capping the opening of the GroEL channel. This is Co-chaperonin GroES from Streptococcus pneumoniae serotype 19F (strain G54).